We begin with the raw amino-acid sequence, 105 residues long: Large ribosomal subunit protein uL24 (105 aa).

The protein belongs to the universal ribosomal protein uL24 family. As to quaternary structure, part of the 50S ribosomal subunit.

Functionally, one of two assembly initiator proteins, it binds directly to the 5'-end of the 23S rRNA, where it nucleates assembly of the 50S subunit. In terms of biological role, one of the proteins that surrounds the polypeptide exit tunnel on the outside of the subunit. The chain is Large ribosomal subunit protein uL24 from Anaplasma marginale (strain St. Maries).